The sequence spans 135 residues: Transcriptional activator protein (135 aa).

Positions 17–32 match the Nuclear localization signal motif; sequence KIQHHIAKKRQVRRRR. A zinc finger spans residues 37–54; that stretch reads CGCSYYIHLDCINHGFTH. The interval 120–135 is transactivation; sequence HLDDLTVSDWSFFKSL.

This sequence belongs to the geminiviridae transcriptional activator protein family. In terms of assembly, monomer. Homodimer. Homooligomer. Self-interaction correlates with nuclear localization and efficient activation of transcription. Monomers suppress local silencing by interacting with and inactivating host adenosine kinase 2 (ADK2) in the cytoplasm. Interacts with and inhibits host SNF1 kinase. Binds to ssDNA. May interact with host RPS27A. Phosphorylated.

Its subcellular location is the host nucleus. The protein resides in the host cytoplasm. Its function is as follows. Multifunctional protein that modulates host antiviral defenses and promotes host attractiveness to insect vectors. Acts as a suppressor of RNA-mediated gene silencing, also known as post-transcriptional gene silencing (PTGS), a mechanism of plant viral defense that limits the accumulation of viral RNAs. TrAP suppresses the host RNA silencing by inhibiting adenosine kinase 2 (ADK2), a kinase involved in a general methylation pathway. Also suppresses the host basal defense by interacting with and inhibiting SNF1 kinase, a key regulator of cell metabolism implicated in innate antiviral defense. In terms of biological role, inhibits signal transduction by the phytohormone jasmonate, making the infected plant more attractive to aphids, which are the second host to play a role as a dissemination vector. Acts by binding to ubiquitin precursor RPS27A, thereby preventing ubiquitin degradation of JAZ. The protein is Transcriptional activator protein of Capsicum annuum (Capsicum pepper).